We begin with the raw amino-acid sequence, 92 residues long: Protein S100-B (92 aa).

The residue at position 2 (Ser2) is an N-acetylserine. EF-hand domains are found at residues 13–48 (DVFH…LEEI) and 49–84 (KEQE…ITTA). His16 provides a ligand contact to Zn(2+). 3 residues coordinate Ca(2+): Ser19, Glu22, and Asp24. His26 lines the Zn(2+) pocket. Asp62, Asp64, Asp66, Glu68, and Glu73 together coordinate Ca(2+). His86 and His91 together coordinate Zn(2+).

This sequence belongs to the S-100 family. As to quaternary structure, dimer of either two alpha chains, or two beta chains, or one alpha and one beta chain. The S100B dimer binds two molecules of STK38. Interacts with CACYBP in a calcium-dependent manner. Interacts with ATAD3A; this interaction probably occurs in the cytosol prior to ATAD3A mitochondrial targeting. Interacts with S100A6. The S100B dimer interacts with two molecules of CAPZA1. Interacts with AGER. Interacts with PPP5C (via TPR repeats); the interaction is calcium-dependent and modulates PPP5C activity. Interacts with TPPP; this interaction inhibits TPPP dimerization. Interacts with isoform CLSTN3beta of CLSTN3; interaction promotes secretion.

It localises to the cytoplasm. The protein localises to the nucleus. Its subcellular location is the secreted. Functionally, small zinc- and- and calcium-binding protein that is highly expressed in astrocytes and constitutes one of the most abundant soluble proteins in brain. Weakly binds calcium but binds zinc very tightly-distinct binding sites with different affinities exist for both ions on each monomer. Physiological concentrations of potassium ion antagonize the binding of both divalent cations, especially affecting high-affinity calcium-binding sites. Acts as a neurotrophic factor that promotes astrocytosis and axonal proliferation. Involved in innervation of thermogenic adipose tissue by acting as an adipocyte-derived neurotrophic factor that promotes sympathetic innervation of adipose tissue. Binds to and initiates the activation of STK38 by releasing autoinhibitory intramolecular interactions within the kinase. Interaction with AGER after myocardial infarction may play a role in myocyte apoptosis by activating ERK1/2 and p53/TP53 signaling. Could assist ATAD3A cytoplasmic processing, preventing aggregation and favoring mitochondrial localization. May mediate calcium-dependent regulation on many physiological processes by interacting with other proteins, such as TPR-containing proteins, and modulating their activity. The sequence is that of Protein S100-B (S100B) from Bos taurus (Bovine).